The chain runs to 415 residues: Histidine--tRNA ligase (415 aa).

It belongs to the class-II aminoacyl-tRNA synthetase family. Homodimer.

It is found in the cytoplasm. It catalyses the reaction tRNA(His) + L-histidine + ATP = L-histidyl-tRNA(His) + AMP + diphosphate + H(+). This is Histidine--tRNA ligase from Rickettsia felis (strain ATCC VR-1525 / URRWXCal2) (Rickettsia azadi).